The sequence spans 153 residues: 6,7-dimethyl-8-ribityllumazine synthase (153 aa).

Residues Phe22, 56 to 58 (AFE), and 80 to 82 (CVI) contribute to the 5-amino-6-(D-ribitylamino)uracil site. 85–86 (AT) serves as a coordination point for (2S)-2-hydroxy-3-oxobutyl phosphate. Catalysis depends on His88, which acts as the Proton donor. Phe113 is a binding site for 5-amino-6-(D-ribitylamino)uracil. Arg127 contacts (2S)-2-hydroxy-3-oxobutyl phosphate.

It belongs to the DMRL synthase family.

It carries out the reaction (2S)-2-hydroxy-3-oxobutyl phosphate + 5-amino-6-(D-ribitylamino)uracil = 6,7-dimethyl-8-(1-D-ribityl)lumazine + phosphate + 2 H2O + H(+). Its pathway is cofactor biosynthesis; riboflavin biosynthesis; riboflavin from 2-hydroxy-3-oxobutyl phosphate and 5-amino-6-(D-ribitylamino)uracil: step 1/2. Functionally, catalyzes the formation of 6,7-dimethyl-8-ribityllumazine by condensation of 5-amino-6-(D-ribitylamino)uracil with 3,4-dihydroxy-2-butanone 4-phosphate. This is the penultimate step in the biosynthesis of riboflavin. The sequence is that of 6,7-dimethyl-8-ribityllumazine synthase from Endomicrobium trichonymphae.